Consider the following 90-residue polypeptide: MSTRKLNKVMVQPVNLIFRYLQNRTRVQIWLYEDVTHRLEGYIIGFDEFMNVVFDEAEEVNMKTKGRNKIGRILLKGDNITLIHAAQQEA.

Positions 14-89 (VNLIFRYLQN…ITLIHAAQQE (76 aa)) constitute a Sm domain.

This sequence belongs to the snRNP Sm proteins family. In terms of assembly, core component of the spliceosomal U1, U2, U4 and U5 small nuclear ribonucleoproteins (snRNPs), the building blocks of the spliceosome.

The protein localises to the nucleus. It localises to the cytoplasm. Its subcellular location is the cytosol. In terms of biological role, plays a role in pre-mRNA splicing as a core component of the spliceosomal U1, U2, U4 and U5 small nuclear ribonucleoproteins (snRNPs), the building blocks of the spliceosome. The polypeptide is Probable small nuclear ribonucleoprotein E (snr-6) (Caenorhabditis elegans).